Consider the following 541-residue polypeptide: Protein yellow (541 aa).

The N-terminal stretch at 1 to 21 (MFQDKGWILVTLITLVTPSWA) is a signal peptide. N-linked (GlcNAc...) asparagine glycosylation is found at Asn144 and Asn215. The segment at 443–463 (QKPQTSWASSPPPPSRTYLPA) is disordered.

Belongs to the major royal jelly protein family.

It is found in the secreted. Functionally, controls the pigmentation pattern of the adult cuticle and larval mouth parts. This is Protein yellow (y) from Drosophila mauritiana (Fruit fly).